The primary structure comprises 477 residues: Glycogen synthase (477 aa).

Position 15 (Lys15) interacts with ADP-alpha-D-glucose.

This sequence belongs to the glycosyltransferase 1 family. Bacterial/plant glycogen synthase subfamily.

The enzyme catalyses [(1-&gt;4)-alpha-D-glucosyl](n) + ADP-alpha-D-glucose = [(1-&gt;4)-alpha-D-glucosyl](n+1) + ADP + H(+). The protein operates within glycan biosynthesis; glycogen biosynthesis. Functionally, synthesizes alpha-1,4-glucan chains using ADP-glucose. This is Glycogen synthase from Glaesserella parasuis serovar 5 (strain SH0165) (Haemophilus parasuis).